The sequence spans 377 residues: Cytoplasmic tRNA 2-thiolation protein 1 (377 aa).

It belongs to the TtcA family. CTU1/NCS6/ATPBD3 subfamily.

Its subcellular location is the cytoplasm. Its pathway is tRNA modification; 5-methoxycarbonylmethyl-2-thiouridine-tRNA biosynthesis. Its function is as follows. Plays a central role in 2-thiolation of mcm(5)S(2)U at tRNA wobble positions of tRNA(Lys), tRNA(Glu) and tRNA(Gln). Directly binds tRNAs and probably acts by catalyzing adenylation of tRNAs, an intermediate required for 2-thiolation. It is unclear whether it acts as a sulfurtransferase that transfers sulfur from thiocarboxylated URM1 onto the uridine of tRNAs at wobble position. Prior mcm(5) tRNA modification by the elongator complex is required for 2-thiolation. May also be involved in protein urmylation. This chain is Cytoplasmic tRNA 2-thiolation protein 1, found in Debaryomyces hansenii (strain ATCC 36239 / CBS 767 / BCRC 21394 / JCM 1990 / NBRC 0083 / IGC 2968) (Yeast).